The sequence spans 292 residues: Nucleotide-binding protein SACE_2139 (292 aa).

15–22 (GLSGAGRS) is an ATP binding site. GTP is bound at residue 66–69 (DVRS).

It belongs to the RapZ-like family.

Functionally, displays ATPase and GTPase activities. The protein is Nucleotide-binding protein SACE_2139 of Saccharopolyspora erythraea (strain ATCC 11635 / DSM 40517 / JCM 4748 / NBRC 13426 / NCIMB 8594 / NRRL 2338).